The following is a 449-amino-acid chain: Adenylosuccinate synthetase (449 aa).

GTP contacts are provided by residues 12–18 (GDEGKGK) and 40–42 (GHT). D13 (proton acceptor) is an active-site residue. The Mg(2+) site is built by D13 and G40. IMP is bound by residues 13 to 16 (DEGK), 38 to 41 (NAGH), T128, R142, Q223, T238, and R302. H41 (proton donor) is an active-site residue. 298–304 (TTTGRQR) is a binding site for substrate. Residues R304, 330–332 (KLD), and 412–414 (SLG) each bind GTP.

This sequence belongs to the adenylosuccinate synthetase family. In terms of assembly, homodimer. Mg(2+) serves as cofactor.

The protein resides in the cytoplasm. The enzyme catalyses IMP + L-aspartate + GTP = N(6)-(1,2-dicarboxyethyl)-AMP + GDP + phosphate + 2 H(+). It participates in purine metabolism; AMP biosynthesis via de novo pathway; AMP from IMP: step 1/2. In terms of biological role, plays an important role in the de novo pathway of purine nucleotide biosynthesis. Catalyzes the first committed step in the biosynthesis of AMP from IMP. The protein is Adenylosuccinate synthetase of Synechococcus sp. (strain JA-2-3B'a(2-13)) (Cyanobacteria bacterium Yellowstone B-Prime).